Consider the following 856-residue polypeptide: Valine--tRNA ligase (856 aa).

Positions 47–57 (PTASGVLHIGH) match the 'HIGH' region motif. The 'KMSKS' region motif lies at 578–582 (KMSKS). Lys-581 is an ATP binding site.

It belongs to the class-I aminoacyl-tRNA synthetase family. ValS type 2 subfamily. As to quaternary structure, monomer.

It is found in the cytoplasm. It carries out the reaction tRNA(Val) + L-valine + ATP = L-valyl-tRNA(Val) + AMP + diphosphate. Its function is as follows. Catalyzes the attachment of valine to tRNA(Val). As ValRS can inadvertently accommodate and process structurally similar amino acids such as threonine, to avoid such errors, it has a 'posttransfer' editing activity that hydrolyzes mischarged Thr-tRNA(Val) in a tRNA-dependent manner. The protein is Valine--tRNA ligase of Tropheryma whipplei (strain TW08/27) (Whipple's bacillus).